A 273-amino-acid chain; its full sequence is Cytosolic sulfotransferase 4 (273 aa).

74 to 79 (KCGTTW) contacts 3'-phosphoadenylyl sulfate. The Proton acceptor role is filled by His-121. Residues Arg-143 and 239 to 241 (RKG) each bind 3'-phosphoadenylyl sulfate.

The protein belongs to the sulfotransferase 1 family.

The protein localises to the cytoplasm. Its function is as follows. Sulfotransferase that utilizes 3'-phospho-5'-adenylyl sulfate (PAPS) as sulfonate donor. This chain is Cytosolic sulfotransferase 4 (SOT4), found in Arabidopsis thaliana (Mouse-ear cress).